A 155-amino-acid chain; its full sequence is Ribosomal RNA large subunit methyltransferase H (155 aa).

Residues L73, G104, and 123–128 (ISKMTF) each bind S-adenosyl-L-methionine.

This sequence belongs to the RNA methyltransferase RlmH family. Homodimer.

The protein localises to the cytoplasm. The catalysed reaction is pseudouridine(1915) in 23S rRNA + S-adenosyl-L-methionine = N(3)-methylpseudouridine(1915) in 23S rRNA + S-adenosyl-L-homocysteine + H(+). In terms of biological role, specifically methylates the pseudouridine at position 1915 (m3Psi1915) in 23S rRNA. In Francisella tularensis subsp. novicida (strain U112), this protein is Ribosomal RNA large subunit methyltransferase H.